The chain runs to 316 residues: Retinol dehydrogenase 11 (316 aa).

Residues 1–21 (MFGFLLLLSLPFILYLVTPKI) form a helical; Signal-anchor for type II membrane protein membrane-spanning segment. Residues 22-316 (RKMLSSGVCT…CDLLGLPVDW (295 aa)) lie on the Cytoplasmic side of the membrane. Position 45 to 51 (45 to 51 (GANTGIG)) interacts with NADP(+). K109 bears the N6-acetyllysine mark. Substrate is bound at residue S174. Catalysis depends on Y199, which acts as the Proton acceptor.

Belongs to the short-chain dehydrogenases/reductases (SDR) family. Post-translationally, not glycosylated. In terms of tissue distribution, expressed at high level in liver and testis. Expressed at lower levels in smooth muscle, thymus, submaxillary gland and epididymis. In testis, expression is restricted to pachytene spermatocytes. Also expressed in four layers of the retina, including the outer segment of rods and cones.

The protein resides in the endoplasmic reticulum membrane. It carries out the reaction all-trans-retinol + NADP(+) = all-trans-retinal + NADPH + H(+). It catalyses the reaction 11-cis-retinol + NADP(+) = 11-cis-retinal + NADPH + H(+). The enzyme catalyses 9-cis-retinol + NADP(+) = 9-cis-retinal + NADPH + H(+). The catalysed reaction is 13-cis-retinol + NADP(+) = 13-cis-retinal + NADPH + H(+). It carries out the reaction a medium-chain primary fatty alcohol + NADP(+) = a medium-chain fatty aldehyde + NADPH + H(+). It catalyses the reaction (2E,6Z)-nona-2,6-dien-1-ol + NADP(+) = (2E,6Z)-nona-2,6-dienal + NADPH + H(+). The enzyme catalyses (E)-oct-2-en-1-ol + NADP(+) = (2E)-octenal + NADPH + H(+). The catalysed reaction is (E)-non-2-en-1-ol + NADP(+) = (E)-non-2-enal + NADPH + H(+). It carries out the reaction heptan-1-ol + NADP(+) = heptanal + NADPH + H(+). It catalyses the reaction hexan-1-ol + NADP(+) = hexanal + NADPH + H(+). The enzyme catalyses decan-1-ol + NADP(+) = decanal + NADPH + H(+). The catalysed reaction is nonan-1-ol + NADP(+) = nonanal + NADPH + H(+). It carries out the reaction octan-1-ol + NADP(+) = octanal + NADPH + H(+). It catalyses the reaction (Z)-non-6-en-1-ol + NADP(+) = (Z)-non-6-enal + NADPH + H(+). It functions in the pathway cofactor metabolism; retinol metabolism. Retinol dehydrogenase with a clear preference for NADP. Displays high activity towards 9-cis, 11-cis and all-trans-retinol, and to a lesser extent on 13-cis-retinol. Also exhibits reductive activity towards toxic lipid peroxidation products such as medium-chain aldehydes trans-2-nonenal, nonanal, and cis-6-nonenal. Has no dehydrogenase activity towards steroid. Seems to be required for homeostasis of retinol in liver and testis. The protein is Retinol dehydrogenase 11 (Rdh11) of Mus musculus (Mouse).